Reading from the N-terminus, the 155-residue chain is Protein-export protein SecB (155 aa).

The protein belongs to the SecB family. As to quaternary structure, homotetramer, a dimer of dimers. One homotetramer interacts with 1 SecA dimer.

The protein localises to the cytoplasm. In terms of biological role, one of the proteins required for the normal export of preproteins out of the cell cytoplasm. It is a molecular chaperone that binds to a subset of precursor proteins, maintaining them in a translocation-competent state. It also specifically binds to its receptor SecA. The sequence is that of Protein-export protein SecB from Shigella sonnei (strain Ss046).